Here is a 301-residue protein sequence, read N- to C-terminus: D-alanine--D-alanine ligase (301 aa).

Residues 99–294 (KCILKAANIR…FSELIDMIID (196 aa)) form the ATP-grasp domain. 126–181 (IEGMGYPVVVKPTHGGSSVATFIIKEEKDIKNAVTEAFKWDSEVIIEKFIKGDEIT) contacts ATP. Residues aspartate 248, glutamate 261, and asparagine 263 each contribute to the Mg(2+) site.

The protein belongs to the D-alanine--D-alanine ligase family. It depends on Mg(2+) as a cofactor. The cofactor is Mn(2+).

The protein localises to the cytoplasm. The enzyme catalyses 2 D-alanine + ATP = D-alanyl-D-alanine + ADP + phosphate + H(+). The protein operates within cell wall biogenesis; peptidoglycan biosynthesis. In terms of biological role, cell wall formation. The sequence is that of D-alanine--D-alanine ligase from Clostridium botulinum (strain Eklund 17B / Type B).